A 323-amino-acid chain; its full sequence is Acetyl esterase (323 aa).

The Involved in the stabilization of the negatively charged intermediate by the formation of the oxyanion hole motif lies at 91–93; sequence HGG. Catalysis depends on residues S165, D262, and H292.

Belongs to the 'GDXG' lipolytic enzyme family. As to quaternary structure, homodimer. Interacts with MalT and MelA.

The protein localises to the cytoplasm. Functionally, displays esterase activity towards short chain fatty esters (acyl chain length of up to 8 carbons). Able to hydrolyze triacetylglycerol (triacetin) and tributyrylglycerol (tributyrin), but not trioleylglycerol (triolein) or cholesterol oleate. Negatively regulates MalT activity by antagonizing maltotriose binding. Inhibits MelA galactosidase activity. The sequence is that of Acetyl esterase from Salmonella paratyphi A (strain AKU_12601).